Here is a 215-residue protein sequence, read N- to C-terminus: Thiopurine S-methyltransferase (215 aa).

Residues tryptophan 10, leucine 45, glutamate 66, and arginine 123 each coordinate S-adenosyl-L-methionine.

This sequence belongs to the class I-like SAM-binding methyltransferase superfamily. TPMT family.

The protein resides in the cytoplasm. The catalysed reaction is S-adenosyl-L-methionine + a thiopurine = S-adenosyl-L-homocysteine + a thiopurine S-methylether.. The polypeptide is Thiopurine S-methyltransferase (Pseudomonas putida (strain W619)).